The following is a 214-amino-acid chain: Membrane-spanning 4-domains subfamily A member 3 (214 aa).

The tract at residues 1-31 (MASHEVDNAELGSASAHGTPGSEAGPEELNT) is disordered. Residues 1–49 (MASHEVDNAELGSASAHGTPGSEAGPEELNTSVYQPIDGSPDYQKAKLQ) lie on the Cytoplasmic side of the membrane. A helical membrane pass occupies residues 50-70 (VLGAIQILNAAMILALGVFLG). Residues 71–81 (SLQYPYHFQKH) lie on the Extracellular side of the membrane. A helical transmembrane segment spans residues 82–102 (FFFFTFYTGYPIWGAVFFCSS). Over 103–124 (GTLSVVAGIKPTRTWIQNSFGM) the chain is Cytoplasmic. A helical membrane pass occupies residues 125–145 (NIASATIALVGTAFLSLNIAV). Residues 146–175 (NIQSLRSCHSSSESPDLCNYMGSISNGMVS) are Extracellular-facing. The helical transmembrane segment at 176–196 (LLLILTLLELCVTISTIAMWC) threads the bilayer. Residues 197 to 214 (NANCCNSREEISSPPNSV) are Cytoplasmic-facing.

It belongs to the MS4A family. As to quaternary structure, interacts with CDKN3. Interacts with CDKN3-CDK2 complexes through its binding to CDKN3; this interaction facilitates dissociation of cyclin A from CDKN3-CDK2 complexes. As to expression, expressed specifically in hematopoietic cells and tissues.

It is found in the endomembrane system. The protein localises to the cytoplasm. The protein resides in the perinuclear region. In terms of biological role, hematopoietic modulator for the G1-S cell cycle transition. Modulates the level of phosphorylation of cyclin-dependent kinase 2 (CDK2) through its direct binding to cyclin-dependent kinase inhibitor 3 (CDKN3/KAP). This is Membrane-spanning 4-domains subfamily A member 3 (MS4A3) from Homo sapiens (Human).